We begin with the raw amino-acid sequence, 490 residues long: Betaine aldehyde dehydrogenase (490 aa).

K(+)-binding residues include Thr26, Ile27, and Asp93. 150-152 (GAW) contributes to the NAD(+) binding site. Lys162 functions as the Charge relay system in the catalytic mechanism. Residue 176–179 (KPSE) participates in NAD(+) binding. Residue Val180 participates in K(+) binding. 230 to 233 (GTST) serves as a coordination point for NAD(+). K(+) is bound at residue Leu246. Catalysis depends on Glu252, which acts as the Proton acceptor. The NAD(+) site is built by Gly254, Cys286, and Glu387. The active-site Nucleophile is the Cys286. At Cys286 the chain carries Cysteine sulfenic acid (-SOH). Lys457 and Gly460 together coordinate K(+). The Charge relay system role is filled by Glu464.

It belongs to the aldehyde dehydrogenase family. As to quaternary structure, dimer of dimers. K(+) serves as cofactor.

The enzyme catalyses betaine aldehyde + NAD(+) + H2O = glycine betaine + NADH + 2 H(+). Its pathway is amine and polyamine biosynthesis; betaine biosynthesis via choline pathway; betaine from betaine aldehyde: step 1/1. In terms of biological role, involved in the biosynthesis of the osmoprotectant glycine betaine. Catalyzes the irreversible oxidation of betaine aldehyde to the corresponding acid. The sequence is that of Betaine aldehyde dehydrogenase from Pseudomonas aeruginosa (strain UCBPP-PA14).